We begin with the raw amino-acid sequence, 245 residues long: Small ribosomal subunit protein uS3 (245 aa).

The KH type-2 domain occupies 21 to 92 (LNEFLTRELA…SVELYAEKVA (72 aa)). The interval 215 to 245 (EEILPTTPVSEQKGAKPEVPVMPQGAPVPTA) is disordered.

Belongs to the universal ribosomal protein uS3 family.

The protein resides in the cytoplasm. It localises to the nucleus. Its subcellular location is the nucleolus. It is found in the mitochondrion inner membrane. The protein localises to the cytoskeleton. The protein resides in the spindle. It carries out the reaction 2'-deoxyribonucleotide-(2'-deoxyribose 5'-phosphate)-2'-deoxyribonucleotide-DNA = a 3'-end 2'-deoxyribonucleotide-(2,3-dehydro-2,3-deoxyribose 5'-phosphate)-DNA + a 5'-end 5'-phospho-2'-deoxyribonucleoside-DNA + H(+). Component of the small ribosomal subunit. The ribosome is a large ribonucleoprotein complex responsible for the synthesis of proteins in the cell. Has endonuclease activity and plays a role in repair of damaged DNA. Also involved in other processes including regulation of transcription, translation of its cognate mRNA, spindle formation and chromosome movement during mitosis, and apoptosis. In Ictalurus punctatus (Channel catfish), this protein is Small ribosomal subunit protein uS3 (rps3).